Reading from the N-terminus, the 178-residue chain is Peptide methionine sulfoxide reductase MsrA (178 aa).

The active site involves cysteine 11.

The protein belongs to the MsrA Met sulfoxide reductase family.

It catalyses the reaction L-methionyl-[protein] + [thioredoxin]-disulfide + H2O = L-methionyl-(S)-S-oxide-[protein] + [thioredoxin]-dithiol. It carries out the reaction [thioredoxin]-disulfide + L-methionine + H2O = L-methionine (S)-S-oxide + [thioredoxin]-dithiol. Functionally, has an important function as a repair enzyme for proteins that have been inactivated by oxidation. Catalyzes the reversible oxidation-reduction of methionine sulfoxide in proteins to methionine. The polypeptide is Peptide methionine sulfoxide reductase MsrA (Natronomonas pharaonis (strain ATCC 35678 / DSM 2160 / CIP 103997 / JCM 8858 / NBRC 14720 / NCIMB 2260 / Gabara) (Halobacterium pharaonis)).